A 113-amino-acid polypeptide reads, in one-letter code: Cell cycle protein GpsB (113 aa).

Positions 36 to 68 form a coiled coil; the sequence is LDMVIKDYSTFTQEIEALQAENIRLVQELDNAP.

Belongs to the GpsB family. As to quaternary structure, forms polymers through the coiled coil domains. Interacts with PBP1, MreC and EzrA.

The protein localises to the cytoplasm. Its function is as follows. Divisome component that associates with the complex late in its assembly, after the Z-ring is formed, and is dependent on DivIC and PBP2B for its recruitment to the divisome. Together with EzrA, is a key component of the system that regulates PBP1 localization during cell cycle progression. Its main role could be the removal of PBP1 from the cell pole after pole maturation is completed. Also contributes to the recruitment of PBP1 to the division complex. Not essential for septum formation. This is Cell cycle protein GpsB from Listeria innocua serovar 6a (strain ATCC BAA-680 / CLIP 11262).